The sequence spans 475 residues: MASFGMNWNQKSPVFWDWENPAPFGPNTMENPKSIPHPEPRGVVVAAANHGSTNSSGGTFTSSSELANGSSKSSLSASFDSSSKLGNSLEFRFASVKGHGKNMCKDGEAGRVEDSGTSPAVAVSHGEPVIGLKLGKRTYFENVCGGQNVKSSSAASGVTCPSTVVKKMKVSQQSTQSSYCQVEGCKVDLSSAREYHRKHKVCEAHSKAPKVIVSGLERRFCQQCSRFHGLAEFDQKKKSCRRRLSDHNARRRKPQQEAISFGSSRLATMFYDARQQTDIYFGQSPFGQVRSNAISSCDNLGGFKFTEAKLPWMKPMKTIGLEDLNFSTLQMPGNVVSHTVHHHDFDGLIPFKGNTTKVLNQGVDPACAVVSSNSNGAPDLRRALSLLSSDSWGPADVQAGSQVHPGGVMPPLAVAAATVTAPTNPVSVMHALHPSTGGGGFWQDGDDPPPLDHASQAQAFMHPGNGSSSGYGHLH.

Positions 49-73 (NHGSTNSSGGTFTSSSELANGSSKS) are disordered. Residues 51–73 (GSTNSSGGTFTSSSELANGSSKS) are compositionally biased toward low complexity. The segment at 177–254 (SSYCQVEGCK…SDHNARRRKP (78 aa)) adopts an SBP-type zinc-finger fold. Zn(2+) contacts are provided by C180, C185, C202, H205, C221, C224, H228, and C240. Positions 237–253 (KKSCRRRLSDHNARRRK) match the Bipartite nuclear localization signal motif. Positions 437-475 (GGGGFWQDGDDPPPLDHASQAQAFMHPGNGSSSGYGHLH) are disordered. Positions 465 to 475 (NGSSSGYGHLH) are enriched in polar residues.

As to expression, expressed in young panicles.

It localises to the nucleus. Its function is as follows. Trans-acting factor that binds specifically to the consensus nucleotide sequence 5'-TNCGTACAA-3'. May be involved in panicle development. This is Squamosa promoter-binding-like protein 12 (SPL12) from Oryza sativa subsp. indica (Rice).